The sequence spans 138 residues: Putative pre-16S rRNA nuclease (138 aa).

The protein belongs to the YqgF nuclease family.

Its subcellular location is the cytoplasm. Functionally, could be a nuclease involved in processing of the 5'-end of pre-16S rRNA. The protein is Putative pre-16S rRNA nuclease of Clostridium beijerinckii (strain ATCC 51743 / NCIMB 8052) (Clostridium acetobutylicum).